Reading from the N-terminus, the 510-residue chain is Crotonobetaine/carnitine--CoA ligase (510 aa).

The protein belongs to the ATP-dependent AMP-binding enzyme family.

It carries out the reaction 4-(trimethylamino)butanoate + ATP + CoA = 4-(trimethylamino)butanoyl-CoA + AMP + diphosphate. The catalysed reaction is crotonobetaine + ATP + CoA = crotonobetainyl-CoA + AMP + diphosphate. The enzyme catalyses (R)-carnitine + ATP + CoA = (R)-carnitinyl-CoA + AMP + diphosphate. The protein operates within amine and polyamine metabolism; carnitine metabolism. Catalyzes the transfer of CoA to carnitine, generating the initial carnitinyl-CoA needed for the CaiB reaction cycle. Also has activity toward crotonobetaine and gamma-butyrobetaine. This is Crotonobetaine/carnitine--CoA ligase from Shigella flexneri serotype 5b (strain 8401).